A 1126-amino-acid chain; its full sequence is Ubiquitin carboxyl-terminal hydrolase 16/45 (1126 aa).

Positions 1–15 (MVKKRQADSRDHDCS) are enriched in basic and acidic residues. Residues 1 to 44 (MVKKRQADSRDHDCSTDSGNEDLHHRKGLGSPGQSDGATPTTAS) form a disordered region. Residues 32 to 44 (PGQSDGATPTTAS) are compositionally biased toward polar residues. Residues 43 to 181 (ASCQHIKKAV…ELVKKLAQKP (139 aa)) form a UBP-type zinc finger. Zn(2+)-binding residues include Cys-45, His-47, Cys-70, Cys-73, Cys-111, Cys-114, Cys-119, His-126, His-130, His-139, Cys-152, and Cys-155. 2 stretches are compositionally biased toward low complexity: residues 215-229 (GGSFDDSSSRGSLAA) and 254-264 (SSGLSTSDSLT). Residues 215 to 264 (GGSFDDSSSRGSLAAAGGGGGVGSSRNRQVAIPMPPPEPSSGLSTSDSLT) form a disordered region. The Nucleophile role is filled by Cys-315. 3 disordered regions span residues 513–547 (KPQPPQRRKPSPELSLTSSSSSVTPSTGQPTINTK), 570–762 (ASLG…SGSS), and 795–833 (EQGASNGTEDADGEAKAIEQPEKTPSQAQAMAQAQARTK). Residues 524 to 539 (PELSLTSSSSSVTPST) show a composition bias toward low complexity. The span at 586 to 598 (QRKAKRAAKKRQK) shows a compositional bias: basic residues. Low complexity-rich tracts occupy residues 599 to 614 (SSLNLNGNDSGNGNEL) and 646 to 657 (TEDSTTSSVTTS). Polar residues predominate over residues 674–701 (APSTNNVPSSTASLTAPSKTYMDSNGNA). A compositionally biased stretch (basic and acidic residues) spans 705–718 (GEKRDDTPEHMDKD). Positions 730-762 (ATSPAPTATNSSTSTSATGNNNSVAGSGLSGSS) are enriched in low complexity. Over residues 807–816 (GEAKAIEQPE) the composition is skewed to basic and acidic residues. A compositionally biased stretch (low complexity) spans 821-830 (QAQAMAQAQA). The Proton acceptor role is filled by His-984. Positions 1037 to 1089 (LKVLDDSDDFSNSSSNSSTSDESQTPATPLEEQQTQQAQQPQQPQQLEEAANV) are disordered. A compositionally biased stretch (low complexity) spans 1046–1086 (FSNSSSNSSTSDESQTPATPLEEQQTQQAQQPQQPQQLEEA).

The protein belongs to the peptidase C19 family.

The catalysed reaction is Thiol-dependent hydrolysis of ester, thioester, amide, peptide and isopeptide bonds formed by the C-terminal Gly of ubiquitin (a 76-residue protein attached to proteins as an intracellular targeting signal).. Involved in the regulation of DNA damage repair. The sequence is that of Ubiquitin carboxyl-terminal hydrolase 16/45 from Drosophila melanogaster (Fruit fly).